Here is a 361-residue protein sequence, read N- to C-terminus: Chorismate synthase (361 aa).

NADP(+)-binding residues include arginine 48 and arginine 54. Residues 125-127 (RSS), 238-239 (NA), glycine 278, 293-297 (KPTSS), and arginine 319 contribute to the FMN site.

The protein belongs to the chorismate synthase family. In terms of assembly, homotetramer. FMNH2 serves as cofactor.

The enzyme catalyses 5-O-(1-carboxyvinyl)-3-phosphoshikimate = chorismate + phosphate. It functions in the pathway metabolic intermediate biosynthesis; chorismate biosynthesis; chorismate from D-erythrose 4-phosphate and phosphoenolpyruvate: step 7/7. In terms of biological role, catalyzes the anti-1,4-elimination of the C-3 phosphate and the C-6 proR hydrogen from 5-enolpyruvylshikimate-3-phosphate (EPSP) to yield chorismate, which is the branch point compound that serves as the starting substrate for the three terminal pathways of aromatic amino acid biosynthesis. This reaction introduces a second double bond into the aromatic ring system. This chain is Chorismate synthase, found in Escherichia coli (strain K12 / MC4100 / BW2952).